We begin with the raw amino-acid sequence, 82 residues long: Cytochrome b559 subunit alpha (82 aa).

A helical membrane pass occupies residues Val21–Trp35. His23 lines the heme pocket.

Belongs to the PsbE/PsbF family. In terms of assembly, heterodimer of an alpha subunit and a beta subunit. PSII is composed of 1 copy each of membrane proteins PsbA, PsbB, PsbC, PsbD, PsbE, PsbF, PsbH, PsbI, PsbJ, PsbK, PsbL, PsbM, PsbT, PsbX, PsbY, PsbZ, Psb30/Ycf12, at least 3 peripheral proteins of the oxygen-evolving complex and a large number of cofactors. It forms dimeric complexes. Heme b serves as cofactor.

It localises to the plastid. The protein resides in the chloroplast thylakoid membrane. This b-type cytochrome is tightly associated with the reaction center of photosystem II (PSII). PSII is a light-driven water:plastoquinone oxidoreductase that uses light energy to abstract electrons from H(2)O, generating O(2) and a proton gradient subsequently used for ATP formation. It consists of a core antenna complex that captures photons, and an electron transfer chain that converts photonic excitation into a charge separation. The chain is Cytochrome b559 subunit alpha from Stigeoclonium helveticum (Green alga).